The primary structure comprises 425 residues: Serine--tRNA ligase (425 aa).

Residue 233-235 coordinates L-serine; sequence TAE. 264 to 266 provides a ligand contact to ATP; sequence RRE. Glutamate 287 contributes to the L-serine binding site. Residue 351–354 coordinates ATP; that stretch reads EISS. Serine 385 provides a ligand contact to L-serine.

Belongs to the class-II aminoacyl-tRNA synthetase family. Type-1 seryl-tRNA synthetase subfamily. As to quaternary structure, homodimer. The tRNA molecule binds across the dimer.

The protein resides in the cytoplasm. It carries out the reaction tRNA(Ser) + L-serine + ATP = L-seryl-tRNA(Ser) + AMP + diphosphate + H(+). It catalyses the reaction tRNA(Sec) + L-serine + ATP = L-seryl-tRNA(Sec) + AMP + diphosphate + H(+). The protein operates within aminoacyl-tRNA biosynthesis; selenocysteinyl-tRNA(Sec) biosynthesis; L-seryl-tRNA(Sec) from L-serine and tRNA(Sec): step 1/1. In terms of biological role, catalyzes the attachment of serine to tRNA(Ser). Is also able to aminoacylate tRNA(Sec) with serine, to form the misacylated tRNA L-seryl-tRNA(Sec), which will be further converted into selenocysteinyl-tRNA(Sec). The polypeptide is Serine--tRNA ligase (Prochlorococcus marinus (strain SARG / CCMP1375 / SS120)).